The primary structure comprises 65 residues: MPSVRIKEREPFDVALRRFKRSCEKAGIVSELRRREYFEKPTWARKRKKTAAVKRAHKSNIIVKR.

It belongs to the bacterial ribosomal protein bS21 family.

This Francisella tularensis subsp. holarctica (strain LVS) protein is Small ribosomal subunit protein bS21B.